Consider the following 209-residue polypeptide: COP9 signalosome complex subunit 8 (209 aa).

A PCI domain is found at 8-179 (ESAFSFKKLL…GALDVSFNKF (172 aa)). At S175 the chain carries Phosphoserine.

This sequence belongs to the CSN8 family. As to quaternary structure, component of the CSN complex, composed of COPS1/GPS1, COPS2, COPS3, COPS4, COPS5, COPS6, COPS7 (COPS7A or COPS7B), COPS8 and COPS9 isoform 1. In the complex, it probably interacts directly with COPS3, COPS4 and COPS7 (COPS7A or COPS7B).

The protein localises to the cytoplasm. It is found in the nucleus. Functionally, component of the COP9 signalosome complex (CSN), a complex involved in various cellular and developmental processes. The CSN complex is an essential regulator of the ubiquitin (Ubl) conjugation pathway by mediating the deneddylation of the cullin subunits of SCF-type E3 ligase complexes, leading to decrease the Ubl ligase activity of SCF-type complexes such as SCF, CSA or DDB2. The complex is also involved in phosphorylation of p53/TP53, c-jun/JUN, IkappaBalpha/NFKBIA, ITPK1 and IRF8/ICSBP, possibly via its association with CK2 and PKD kinases. CSN-dependent phosphorylation of TP53 and JUN promotes and protects degradation by the Ubl system, respectively. In Homo sapiens (Human), this protein is COP9 signalosome complex subunit 8 (COPS8).